Here is a 950-residue protein sequence, read N- to C-terminus: Protocadherin alpha-3 (950 aa).

Positions 1-29 (MLFSWREDPGAQCLLLSLLLLAASEVGSG) are cleaved as a signal peptide. 6 consecutive Cadherin domains span residues 30–133 (QLHY…APVF), 134–242 (PMAV…APAF), 243–350 (ERTI…VPEL), 351–455 (VIQS…APAF), 456–565 (SQSE…APAL), and 581–678 (VPRS…APKA). Topologically, residues 30 to 697 (QLHYSVSEEA…GPEAALVDVN (668 aa)) are extracellular. Residues N257 and N265 are each glycosylated (N-linked (GlcNAc...) asparagine). Residue N548 is glycosylated (N-linked (GlcNAc...) asparagine). A helical membrane pass occupies residues 698 to 718 (VYLIVAICAVSSLLVLTLLLY). The Cytoplasmic portion of the chain corresponds to 719-950 (TALRCSAPPT…GNSTTDNSDQ (232 aa)). PXXP repeat units lie at residues 734 to 737 (PGKP) and 774 to 777 (PSLP). The segment at 734–894 (PGKPTLVCSS…PDKFIIPGSP (161 aa)) is 6 X 4 AA repeats of P-X-X-P. Disordered stretches follow at residues 777 to 806 (PPCP…NPDW), 831 to 856 (GPGG…EVSP), and 869 to 950 (FKYG…NSDQ). Over residues 782 to 797 (SRDREEKQDVDVDLSA) the composition is skewed to basic and acidic residues. 4 PXXP repeats span residues 799–802 (PRQP), 832–835 (PGGP), 873–876 (PGNP), and 891–894 (PGSP). Positions 909-923 (DKSDFITFGKKEETK) are enriched in basic and acidic residues.

The protein localises to the cell membrane. Potential calcium-dependent cell-adhesion protein. May be involved in the establishment and maintenance of specific neuronal connections in the brain. The protein is Protocadherin alpha-3 (PCDHA3) of Homo sapiens (Human).